A 124-amino-acid chain; its full sequence is Large ribosomal subunit protein uL22 (124 aa).

Belongs to the universal ribosomal protein uL22 family. Part of the 50S ribosomal subunit.

Functionally, this protein binds specifically to 23S rRNA; its binding is stimulated by other ribosomal proteins, e.g. L4, L17, and L20. It is important during the early stages of 50S assembly. It makes multiple contacts with different domains of the 23S rRNA in the assembled 50S subunit and ribosome. Its function is as follows. The globular domain of the protein is located near the polypeptide exit tunnel on the outside of the subunit, while an extended beta-hairpin is found that lines the wall of the exit tunnel in the center of the 70S ribosome. The protein is Large ribosomal subunit protein uL22 of Campylobacter lari (strain RM2100 / D67 / ATCC BAA-1060).